The sequence spans 417 residues: Gamma-glutamyl phosphate reductase (417 aa).

This sequence belongs to the gamma-glutamyl phosphate reductase family.

It localises to the cytoplasm. It carries out the reaction L-glutamate 5-semialdehyde + phosphate + NADP(+) = L-glutamyl 5-phosphate + NADPH + H(+). The protein operates within amino-acid biosynthesis; L-proline biosynthesis; L-glutamate 5-semialdehyde from L-glutamate: step 2/2. Its function is as follows. Catalyzes the NADPH-dependent reduction of L-glutamate 5-phosphate into L-glutamate 5-semialdehyde and phosphate. The product spontaneously undergoes cyclization to form 1-pyrroline-5-carboxylate. In Enterococcus faecalis (strain ATCC 700802 / V583), this protein is Gamma-glutamyl phosphate reductase.